Reading from the N-terminus, the 129-residue chain is Small ribosomal subunit protein uS11 (129 aa).

This sequence belongs to the universal ribosomal protein uS11 family. In terms of assembly, part of the 30S ribosomal subunit. Interacts with proteins S7 and S18. Binds to IF-3.

Its function is as follows. Located on the platform of the 30S subunit, it bridges several disparate RNA helices of the 16S rRNA. Forms part of the Shine-Dalgarno cleft in the 70S ribosome. The protein is Small ribosomal subunit protein uS11 of Thermosipho melanesiensis (strain DSM 12029 / CIP 104789 / BI429).